The chain runs to 57 residues: COP9 signalosome complex subunit 9 (57 aa).

T26 is subject to Phosphothreonine.

The protein belongs to the CSN9 family. Component of the CSN complex, composed of COPS1/GPS1, COPS2, COPS3, COPS4, COPS5, COPS6, COPS7 (COPS7A or COPS7B), COPS8 and COPS9. In the complex, it interacts directly with COPS3, COPS5 and COPS6.

The protein localises to the nucleus. Its subcellular location is the cytoplasm. It localises to the nucleoplasm. In terms of biological role, component of the COP9 signalosome complex (CSN), a complex involved in various cellular and developmental processes. The CSN complex is an essential regulator of the ubiquitin (Ubl) conjugation pathway by mediating the deneddylation of the cullin subunits of SCF-type E3 ligase complexes, leading to decrease the Ubl ligase activity of SCF-type complexes such as SCF, CSA or DDB2. The complex is also involved in phosphorylation of p53/TP53, c-jun/JUN, IkappaBalpha/NFKBIA, ITPK1 and IRF8/ICSBP, possibly via its association with CK2 and PKD kinases. CSN-dependent phosphorylation of TP53 and JUN promotes and protects degradation by the Ubl system, respectively. Plays a role in cell proliferation. The protein is COP9 signalosome complex subunit 9 of Mus musculus (Mouse).